Here is a 63-residue protein sequence, read N- to C-terminus: Sperm protamine P1 (63 aa).

Residues 1–63 (MARYRRHSRS…RYSRRGRRRY (63 aa)) are disordered.

It belongs to the protamine P1 family. As to expression, testis.

The protein localises to the nucleus. It is found in the chromosome. Its function is as follows. Protamines substitute for histones in the chromatin of sperm during the haploid phase of spermatogenesis. They compact sperm DNA into a highly condensed, stable and inactive complex. The protein is Sperm protamine P1 (PRM1) of Sminthopsis bindi (Kakadu dunnart).